Reading from the N-terminus, the 436-residue chain is UDP-N-acetylmuramate--L-alanine ligase (436 aa).

108 to 114 (GAHGKTS) contributes to the ATP binding site.

It belongs to the MurCDEF family.

The protein localises to the cytoplasm. The enzyme catalyses UDP-N-acetyl-alpha-D-muramate + L-alanine + ATP = UDP-N-acetyl-alpha-D-muramoyl-L-alanine + ADP + phosphate + H(+). The protein operates within cell wall biogenesis; peptidoglycan biosynthesis. Cell wall formation. This is UDP-N-acetylmuramate--L-alanine ligase from Bacillus cereus (strain AH187).